The sequence spans 1164 residues: DNA-directed RNA polymerase 132 kDa polypeptide (1164 aa).

It belongs to the RNA polymerase beta chain family. As to quaternary structure, the DNA-dependent RNA polymerase used for intermediate and late genes expression consists of eight subunits (147) kDa, (133) kDa, (35) kDa, (30) kDa, (22) kDa, (19) kDa, (18) kDa and (7) kDa totalling more than 500 kDa in mass. The same holoenzyme, with the addition of the transcription-specificity factor RAP94, is used for early gene expression.

It is found in the virion. The enzyme catalyses RNA(n) + a ribonucleoside 5'-triphosphate = RNA(n+1) + diphosphate. Its function is as follows. Part of the DNA-dependent RNA polymerase which catalyzes the transcription of viral DNA into RNA using the four ribonucleoside triphosphates as substrates. Responsible for the transcription of early, intermediate and late genes. DNA-dependent RNA polymerase associates with the early transcription factor (ETF), itself composed of D6 and A7, thereby allowing the early genes transcription. Late transcription, and probably also intermediate transcription, require newly synthesized RNA polymerase. The protein is DNA-directed RNA polymerase 132 kDa polypeptide (RPO132) of Monkeypox virus (strain Zaire-96-I-16) (MPX).